Here is a 136-residue protein sequence, read N- to C-terminus: uncharacterized protein (136 aa).

The protein belongs to the MG439/MG440 family.

This is an uncharacterized protein from Mycoplasma pneumoniae (strain ATCC 29342 / M129 / Subtype 1) (Mycoplasmoides pneumoniae).